Here is an 871-residue protein sequence, read N- to C-terminus: Valine--tRNA ligase (871 aa).

The 'HIGH' region signature appears at 47–57 (PNVTGRLHIGH). The 'KMSKS' region motif lies at 534 to 538 (KMSKS). Lys537 provides a ligand contact to ATP. A coiled-coil region spans residues 805-871 (DLTPILNRLN…IEEELARLTR (67 aa)).

This sequence belongs to the class-I aminoacyl-tRNA synthetase family. ValS type 1 subfamily. Monomer.

It is found in the cytoplasm. The enzyme catalyses tRNA(Val) + L-valine + ATP = L-valyl-tRNA(Val) + AMP + diphosphate. Catalyzes the attachment of valine to tRNA(Val). As ValRS can inadvertently accommodate and process structurally similar amino acids such as threonine, to avoid such errors, it has a 'posttransfer' editing activity that hydrolyzes mischarged Thr-tRNA(Val) in a tRNA-dependent manner. The chain is Valine--tRNA ligase from Nitratiruptor sp. (strain SB155-2).